The primary structure comprises 156 residues: 6,7-dimethyl-8-ribityllumazine synthase (156 aa).

Residues phenylalanine 23, 57-59 (AYE), and 81-83 (AII) contribute to the 5-amino-6-(D-ribitylamino)uracil site. 86–87 (GT) is a binding site for (2S)-2-hydroxy-3-oxobutyl phosphate. Histidine 89 serves as the catalytic Proton donor. Phenylalanine 114 provides a ligand contact to 5-amino-6-(D-ribitylamino)uracil. Arginine 128 contacts (2S)-2-hydroxy-3-oxobutyl phosphate.

It belongs to the DMRL synthase family.

The enzyme catalyses (2S)-2-hydroxy-3-oxobutyl phosphate + 5-amino-6-(D-ribitylamino)uracil = 6,7-dimethyl-8-(1-D-ribityl)lumazine + phosphate + 2 H2O + H(+). It functions in the pathway cofactor biosynthesis; riboflavin biosynthesis; riboflavin from 2-hydroxy-3-oxobutyl phosphate and 5-amino-6-(D-ribitylamino)uracil: step 1/2. In terms of biological role, catalyzes the formation of 6,7-dimethyl-8-ribityllumazine by condensation of 5-amino-6-(D-ribitylamino)uracil with 3,4-dihydroxy-2-butanone 4-phosphate. This is the penultimate step in the biosynthesis of riboflavin. The chain is 6,7-dimethyl-8-ribityllumazine synthase from Helicobacter pylori (strain HPAG1).